The chain runs to 92 residues: DNA-directed RNA polymerase subunit Rpo5 (92 aa).

Belongs to the archaeal Rpo5/eukaryotic RPB5 RNA polymerase subunit family. In terms of assembly, part of the RNA polymerase complex.

The protein resides in the cytoplasm. It carries out the reaction RNA(n) + a ribonucleoside 5'-triphosphate = RNA(n+1) + diphosphate. In terms of biological role, DNA-dependent RNA polymerase (RNAP) catalyzes the transcription of DNA into RNA using the four ribonucleoside triphosphates as substrates. The sequence is that of DNA-directed RNA polymerase subunit Rpo5 from Methanopyrus kandleri (strain AV19 / DSM 6324 / JCM 9639 / NBRC 100938).